The sequence spans 306 residues: Nucleotide-binding protein RSal33209_2275 (306 aa).

Residue 29 to 36 (GMSGAGRS) coordinates ATP. GTP is bound at residue 80–83 (DVRG).

The protein belongs to the RapZ-like family.

Its function is as follows. Displays ATPase and GTPase activities. The chain is Nucleotide-binding protein RSal33209_2275 from Renibacterium salmoninarum (strain ATCC 33209 / DSM 20767 / JCM 11484 / NBRC 15589 / NCIMB 2235).